Here is a 142-residue protein sequence, read N- to C-terminus: Alpha-lactalbumin (142 aa).

Positions 1–19 (MMSFVSLLLVGILFHATQA) are cleaved as a signal peptide. Positions 20–142 (EQLTKCEVFQ…KLDQWLCEKL (123 aa)) constitute a C-type lysozyme domain. 4 disulfides stabilise this stretch: Cys-25-Cys-139, Cys-47-Cys-130, Cys-80-Cys-96, and Cys-92-Cys-110. 2 N-linked (GlcNAc...) asparagine glycosylation sites follow: Asn-64 and Asn-93. Ca(2+) contacts are provided by Lys-98, Asp-101, Asp-103, Asp-106, and Asp-107.

This sequence belongs to the glycosyl hydrolase 22 family. As to quaternary structure, lactose synthase (LS) is a heterodimer of a catalytic component, beta1,4-galactosyltransferase (beta4Gal-T1) and a regulatory component, alpha-lactalbumin (LA). As to expression, mammary gland specific. Secreted in milk.

The protein resides in the secreted. Functionally, regulatory subunit of lactose synthase, changes the substrate specificity of galactosyltransferase in the mammary gland making glucose a good acceptor substrate for this enzyme. This enables LS to synthesize lactose, the major carbohydrate component of milk. In other tissues, galactosyltransferase transfers galactose onto the N-acetylglucosamine of the oligosaccharide chains in glycoproteins. This is Alpha-lactalbumin (LALBA) from Capra hircus (Goat).